Consider the following 484-residue polypeptide: MDLGKDQSHLKHHQTPDPHQEENHSPEVIGTWSLRNRELLRKRKAEVHEKETSQWLFGEQKKRKQQRTGKGNRRGRKRQQNTELKVEPQPQIEKEIVEKALAPIEKKTEPPGSITKVFPSVASPQKVVPEEHFSEICQESNIYQENFSEYQEIAVQNHSSETCQHVSEPEDLSPKMYQEISVLQDNSSKICQDMKEPEDNSPNTCQVISVIQDHPFKMYQDMAKREDLAPKMCQEAAVPKILPCPTSEDTADLAGCSLQAYPKPDVPKGYILDTDQNPAEPEEYNETDQGIAETEGLFPKIQEIAEPKDLSTKTHQESAEPKYLPHKTCNEIIVPKAPSHKTIQETPHSEDYSIEINQETPGSEKYSPETYQEIPGLEEYSPEIYQETSQLEEYSPEIYQETPGPEDLSTETYKNKDVPKECFPEPHQETGGPQGQDPKAHQEDAKDAYTFPQEMKEKPKEEPGIPAILNESHPENDVYSYVLF.

Residues 1 to 25 (MDLGKDQSHLKHHQTPDPHQEENHS) are compositionally biased toward basic and acidic residues. 2 disordered regions span residues 1 to 32 (MDLGKDQSHLKHHQTPDPHQEENHSPEVIGTW) and 44 to 91 (KAEV…PQPQ). The tract at residues 7 to 87 (QSHLKHHQTP…RQQNTELKVE (81 aa)) is necessary for nuclear localization. The span at 61 to 79 (KKRKQQRTGKGNRRGRKRQ) shows a compositional bias: basic residues. A phosphoserine mark is found at Ser-123, Ser-159, Ser-181, Ser-188, and Ser-201. At Thr-246 the chain carries Phosphothreonine. Disordered regions lie at residues 265 to 290 (DVPKGYILDTDQNPAEPEEYNETDQG), 306 to 369 (EPKD…YSPE), and 386 to 471 (QETS…ILNE). A compositionally biased stretch (basic and acidic residues) spans 306–320 (EPKDLSTKTHQESAE). A phosphoserine mark is found at Ser-349 and Ser-353. Residue Thr-360 is modified to Phosphothreonine. Phosphoserine occurs at positions 363 and 367. 3 stretches are compositionally biased toward basic and acidic residues: residues 413–428 (YKNKDVPKECFPEPHQ), 438–447 (PKAHQEDAKD), and 454–463 (EMKEKPKEEP).

In terms of tissue distribution, expressed in hematopoietic precursor cells, thyroid and spermatids (at protein level). Expressed in bone marrow, testis, thymus. Expressed in prostate cancer and ovarian cancer. Also expressed in thymus and thyroid tumors, non-Hodgkin lymphoma, various leukemia cell lines, peripheral blood mononuclear cells (PBMCs) and bone marrow mononuclear cells (BMMCs) of patients with leukemia.

The protein resides in the nucleus. In terms of biological role, regulates the proliferation and differentiation of hematopoietic cells. Overexpression block the TPA-induced megakaryocytic differentiation in the K562 cell model. May also prevent cell apoptosis through the activation of the nuclear factor-kappa B (NF-kB). The polypeptide is Hemogen (HEMGN) (Homo sapiens (Human)).